Consider the following 269-residue polypeptide: Glutamate racemase (269 aa).

Substrate-binding positions include 14–15 (DS) and 46–47 (YS). Cysteine 78 (proton donor/acceptor) is an active-site residue. Residue 79–80 (NT) participates in substrate binding. Cysteine 189 functions as the Proton donor/acceptor in the catalytic mechanism. 190 to 191 (TH) contacts substrate.

Belongs to the aspartate/glutamate racemases family.

It carries out the reaction L-glutamate = D-glutamate. It participates in cell wall biogenesis; peptidoglycan biosynthesis. Its function is as follows. Provides the (R)-glutamate required for cell wall biosynthesis. In Haemophilus influenzae (strain ATCC 51907 / DSM 11121 / KW20 / Rd), this protein is Glutamate racemase.